The chain runs to 102 residues: Pole-localizer protein TmaR (102 aa).

Positions 7–34 form a coiled coil; that stretch reads IINQARRKNKLKRELQDNQKKIRDNQKR.

Belongs to the pole-localizer TmaR family.

The protein resides in the cytoplasm. Pole-localizer protein involved in the regulation of several cellular processes. This is Pole-localizer protein TmaR from Aliivibrio fischeri (strain ATCC 700601 / ES114) (Vibrio fischeri).